The following is a 423-amino-acid chain: Lipase member M (423 aa).

Positions 1-33 (MLETLSRQWIVSHRMEMWLLILVAYMFQRNVNS) are cleaved as a signal peptide. Residue asparagine 48 is glycosylated (N-linked (GlcNAc...) asparagine). The AB hydrolase-1 domain maps to 92-392 (PVVLLQHGLV…EWAHVDFIWG (301 aa)). The Nucleophile role is filled by serine 186. Cysteine 260 and cysteine 269 form a disulfide bridge. Active-site charge relay system residues include aspartate 357 and histidine 386.

Belongs to the AB hydrolase superfamily. Lipase family. As to expression, exclusively expressed in the epidermis within the granular keratinocytes.

It is found in the secreted. Functionally, plays a highly specific role in the last step of keratinocyte differentiation. May have an essential function in lipid metabolism of the most differentiated epidermal layers. The polypeptide is Lipase member M (LIPM) (Homo sapiens (Human)).